Here is a 763-residue protein sequence, read N- to C-terminus: Phosphoglycerol transferase I (763 aa).

The next 4 membrane-spanning stretches (helical) occupy residues 1 to 21, 26 to 46, 77 to 97, and 108 to 128; these read MSEL…AWKA, WWFA…ITLF, ILPG…LGWI, and FGYS…SPAF.

The protein belongs to the OpgB family.

It is found in the cell inner membrane. It catalyses the reaction a phosphatidylglycerol + a membrane-derived-oligosaccharide D-glucose = a 1,2-diacyl-sn-glycerol + a membrane-derived-oligosaccharide 6-(glycerophospho)-D-glucose.. It participates in glycan metabolism; osmoregulated periplasmic glucan (OPG) biosynthesis. Functionally, transfers a phosphoglycerol residue from phosphatidylglycerol to the membrane-bound nascent glucan backbones. This chain is Phosphoglycerol transferase I, found in Escherichia coli (strain 55989 / EAEC).